Reading from the N-terminus, the 370-residue chain is UDP-3-O-acylglucosamine N-acyltransferase (370 aa).

The active-site Proton acceptor is histidine 252. Residues 350 to 370 (AAGRQDGPAANAASSSAGDKA) are disordered. Residues 358–370 (AANAASSSAGDKA) show a composition bias toward low complexity.

This sequence belongs to the transferase hexapeptide repeat family. LpxD subfamily. Homotrimer.

The catalysed reaction is a UDP-3-O-[(3R)-3-hydroxyacyl]-alpha-D-glucosamine + a (3R)-hydroxyacyl-[ACP] = a UDP-2-N,3-O-bis[(3R)-3-hydroxyacyl]-alpha-D-glucosamine + holo-[ACP] + H(+). The protein operates within bacterial outer membrane biogenesis; LPS lipid A biosynthesis. Functionally, catalyzes the N-acylation of UDP-3-O-acylglucosamine using 3-hydroxyacyl-ACP as the acyl donor. Is involved in the biosynthesis of lipid A, a phosphorylated glycolipid that anchors the lipopolysaccharide to the outer membrane of the cell. This Paraburkholderia xenovorans (strain LB400) protein is UDP-3-O-acylglucosamine N-acyltransferase.